Here is a 257-residue protein sequence, read N- to C-terminus: Spermidine/putrescine transport system permease protein PotC (257 aa).

The Cytoplasmic segment spans residues 1–7 (MSRFFLR). Residues 8–27 (NAFMFVVYAYLYIPIIILVT) traverse the membrane as a helical segment. Topologically, residues 28–65 (NSFNKDRYGLSWKGFSWNWYERLFNNDTLIQAAIHSVT) are periplasmic. Residues 60–248 (AIHSVTIAFF…VLSLALVVLS (189 aa)) form the ABC transmembrane type-1 domain. Residues 66–85 (IAFFAATLATIVGGLTAIAL) form a helical membrane-spanning segment. Topologically, residues 86 to 100 (YRYRFRGKQAVSGML) are cytoplasmic. Residues 101–120 (FIVMMSPDIVMAVSLLALFM) traverse the membrane as a helical segment. Over 121–128 (VVGISLGF) the chain is Periplasmic. Residues 129–148 (WSLLLAHVTFCLPYVTVTIF) traverse the membrane as a helical segment. At 149-176 (SRLNGFDSRMLEAAKDLGASEVTILRKI) the chain is on the cytoplasmic side. The chain crosses the membrane as a helical span at residues 177–196 (ILPLALPAVVSGWLLSFTIS). Over 197–231 (LDDVVVSSFVSGVSYEILPLRIFSLVKTGVTPEVN) the chain is Periplasmic. The helical transmembrane segment at 232–251 (ALATIMIVLSLALVVLSQLI) threads the bilayer. The Cytoplasmic portion of the chain corresponds to 252 to 257 (TRKNNH).

The protein belongs to the binding-protein-dependent transport system permease family. CysTW subfamily.

The protein localises to the cell inner membrane. Its function is as follows. Required for the activity of the bacterial periplasmic transport system of putrescine and spermidine. In Haemophilus influenzae (strain ATCC 51907 / DSM 11121 / KW20 / Rd), this protein is Spermidine/putrescine transport system permease protein PotC (potC).